Reading from the N-terminus, the 758-residue chain is Probable TonB-dependent receptor NMB0964 (758 aa).

The first 24 residues, 1–24 (MAQTTLKPIVLSILLINTPLLAQA), serve as a signal peptide directing secretion. One can recognise a TBDR plug domain in the interval 50-161 (LLHTSTASDK…VAGLVDVADG (112 aa)). In terms of domain architecture, TBDR beta-barrel spans 171-758 (GVSGELGLRL…SFTGGVNVKF (588 aa)). Positions 741–758 (SDTPQMGRSFTGGVNVKF) match the TonB C-terminal box motif.

Belongs to the TonB-dependent receptor family.

The protein resides in the cell outer membrane. Its function is as follows. Probable receptor, TonB-dependent. This Neisseria meningitidis serogroup B (strain ATCC BAA-335 / MC58) protein is Probable TonB-dependent receptor NMB0964.